A 266-amino-acid chain; its full sequence is 3-methyl-2-oxobutanoate hydroxymethyltransferase (266 aa).

Mg(2+) contacts are provided by D45 and D84. 3-methyl-2-oxobutanoate is bound by residues 45–46, D84, and K112; that span reads DS. Residue E114 coordinates Mg(2+). E181 serves as the catalytic Proton acceptor.

It belongs to the PanB family. Homodecamer; pentamer of dimers. The cofactor is Mg(2+).

The protein localises to the cytoplasm. It carries out the reaction 3-methyl-2-oxobutanoate + (6R)-5,10-methylene-5,6,7,8-tetrahydrofolate + H2O = 2-dehydropantoate + (6S)-5,6,7,8-tetrahydrofolate. It participates in cofactor biosynthesis; (R)-pantothenate biosynthesis; (R)-pantoate from 3-methyl-2-oxobutanoate: step 1/2. Functionally, catalyzes the reversible reaction in which hydroxymethyl group from 5,10-methylenetetrahydrofolate is transferred onto alpha-ketoisovalerate to form ketopantoate. This Pseudomonas syringae pv. tomato (strain ATCC BAA-871 / DC3000) protein is 3-methyl-2-oxobutanoate hydroxymethyltransferase.